We begin with the raw amino-acid sequence, 182 residues long: Ribosome-recycling factor (182 aa).

This sequence belongs to the RRF family.

It is found in the cytoplasm. In terms of biological role, responsible for the release of ribosomes from messenger RNA at the termination of protein biosynthesis. May increase the efficiency of translation by recycling ribosomes from one round of translation to another. This is Ribosome-recycling factor from Nostoc sp. (strain PCC 7120 / SAG 25.82 / UTEX 2576).